The sequence spans 481 residues: MEAPAATSPSIGFPIDGRCNYFVEKKKRFCRMVAAAGKRFCGEHAGSAEEENTRKRILCPLDPKHTVYEDQLAKHLKKCNSREKPKPDFFIQDINAGLKDETEIPEQLVPFSSLSEEQLENLIKKLRKASEGLNSTHEDHIMSHPALHDALNDPRNGDCAVKHLKQQASILGNIEKLKLLGPRRCFVEFGAGKGKLSHWVDIALKDAENVHFILVERVTTRFKVDGKHRKKDSVFERLQIDIQHLCLNRVPVLREGRLPVVGIGKHLCGVATDVALRCLVETYAASFEEKDEEPLAKRIKNDKTEKESNTLAKEGSEKDVPETWTPVAGIVIALCCHHRCDWRHYVGKEYFKALGLGAVEFYYFQRMSSWATCGMRTSLEGSDVTPERKDAQRDENEEHDDGGDRLTDGNTDSLPGILTVEEKKKIGHLCKLLIDQGRLQYLQQKGFSPALQYYTDPLVSLENVLLTAVPAHPSSQEKHHQ.

Residues 56 to 83 form a CHHC U11-48K-type zinc finger; the sequence is RILCPLDPKHTVYEDQLAKHLKKCNSRE. Residues Cys-59, His-65, His-75, and Cys-79 each contribute to the Zn(2+) site. Residues 113–140 adopt a coiled-coil conformation; that stretch reads SLSEEQLENLIKKLRKASEGLNSTHEDH. 2 disordered regions span residues 296-319 and 379-414; these read AKRI…SEKD and LEGS…TDSL. Residues 385–407 are compositionally biased toward basic and acidic residues; it reads TPERKDAQRDENEEHDDGGDRLT.

This sequence belongs to the methyltransferase TRM13 family.

The enzyme catalyses cytidine(4) in tRNA(Pro) + S-adenosyl-L-methionine = 2'-O-methylcytidine(4) in tRNA(Pro) + S-adenosyl-L-homocysteine + H(+). It catalyses the reaction cytidine(4) in tRNA(Gly)(GCC) + S-adenosyl-L-methionine = 2'-O-methylcytidine(4) in tRNA(Gly)(GCC) + S-adenosyl-L-homocysteine + H(+). It carries out the reaction adenosine(4) in tRNA(His) + S-adenosyl-L-methionine = 2'-O-methyladenosine(4) in tRNA(His) + S-adenosyl-L-homocysteine + H(+). Functionally, tRNA methylase which 2'-O-methylates cytidine(4) in tRNA(Pro) and tRNA(Gly)(GCC), and adenosine(4) in tRNA(His). This is tRNA:m(4)X modification enzyme TRM13 homolog (Trmt13) from Mus musculus (Mouse).